A 54-amino-acid chain; its full sequence is UPF0434 protein BCI_0256 (54 aa).

It belongs to the UPF0434 family.

The chain is UPF0434 protein BCI_0256 from Baumannia cicadellinicola subsp. Homalodisca coagulata.